The sequence spans 107 residues: MPLWVFFVILTLTNGSHCSPSPSLPFRIRRYADAIFTSSYRKVLGQLSARKLLQDIMSRQQGERNQEQGPRVRLGRQVDSMWADHRQMSLESLLAALLQKHSRDSQG.

A signal peptide spans 1 to 19 (MPLWVFFVILTLTNGSHCS). A propeptide spanning residues 20-30 (PSPSLPFRIRR) is cleaved from the precursor. Leu-74 bears the Leucine amide mark. A propeptide spanning residues 77–107 (QVDSMWADHRQMSLESLLAALLQKHSRDSQG) is cleaved from the precursor.

The protein belongs to the glucagon family.

It is found in the secreted. GRF is released by the hypothalamus and acts on the adenohypophyse to stimulate the secretion of growth hormone. The polypeptide is Somatoliberin (GHRH) (Mesocricetus auratus (Golden hamster)).